Here is a 59-residue protein sequence, read N- to C-terminus: Photosystem II reaction center protein K (59 aa).

The propeptide occupies 1-22; it reads MLNIFSLICLSSALHSSSFFFA. A helical membrane pass occupies residues 38–58; that stretch reads MPVIPVLFFLLALVWQAAVSF.

Belongs to the PsbK family. As to quaternary structure, PSII is composed of 1 copy each of membrane proteins PsbA, PsbB, PsbC, PsbD, PsbE, PsbF, PsbH, PsbI, PsbJ, PsbK, PsbL, PsbM, PsbT, PsbX, PsbY, PsbZ, Psb30/Ycf12, at least 3 peripheral proteins of the oxygen-evolving complex and a large number of cofactors. It forms dimeric complexes.

Its subcellular location is the plastid. It is found in the chloroplast thylakoid membrane. Its function is as follows. One of the components of the core complex of photosystem II (PSII). PSII is a light-driven water:plastoquinone oxidoreductase that uses light energy to abstract electrons from H(2)O, generating O(2) and a proton gradient subsequently used for ATP formation. It consists of a core antenna complex that captures photons, and an electron transfer chain that converts photonic excitation into a charge separation. This chain is Photosystem II reaction center protein K, found in Piper cenocladum (Ant piper).